Consider the following 109-residue polypeptide: Guanylin (109 aa).

The first 21 residues, 1-21 (MNTFLFPTLCLLGVWAALAGG), serve as a signal peptide directing secretion. Residues 22-94 (VTVKDGEFSF…LERLETIAQD (73 aa)) constitute a propeptide that is removed on maturation. 3 cysteine pairs are disulfide-bonded: cysteine 63-cysteine 76, cysteine 98-cysteine 106, and cysteine 101-cysteine 109.

Belongs to the guanylin family.

It is found in the secreted. Functionally, endogenous activator of intestinal guanylate cyclase. It stimulates this enzyme through the same receptor binding region as the heat-stable enterotoxins. The polypeptide is Guanylin (GUCA2A) (Sus scrofa (Pig)).